Consider the following 94-residue polypeptide: Large ribosomal subunit protein uL29 (94 aa).

Residues 66 to 94 are disordered; sequence NPGERKSRVLSRAKRKKKNLARLSAKVKG. A compositionally biased stretch (basic residues) spans 73-94; that stretch reads RVLSRAKRKKKNLARLSAKVKG.

This sequence belongs to the universal ribosomal protein uL29 family.

This chain is Large ribosomal subunit protein uL29, found in Leptospira borgpetersenii serovar Hardjo-bovis (strain JB197).